The sequence spans 429 residues: Sex determination protein fox-1 (429 aa).

The span at 156 to 180 shows a compositional bias: low complexity; sequence ATTAGSTNGSAAVTQPDPSTSSGPD. The segment at 156-188 is disordered; sequence ATTAGSTNGSAAVTQPDPSTSSGPDGPKRLHVS. Residues 183-259 enclose the RRM domain; that stretch reads KRLHVSNIPF…RKIEVNCATA (77 aa).

As to quaternary structure, interacts with sup-12. In terms of tissue distribution, in males and hermaphrodites expressed in a subset of cells in the head and tail. Expressed in the pharynx, intestine and in muscles from the vulva and body wall.

It localises to the nucleus. RNA-binding protein that regulates tissue-specific alternative splicing events by binding to 5'-UGCAUG-3' and 5'-GCACG-3' elements. Also binds to poly(A), poly(G), poly(C), or poly(U) stretches of RNA. Plays a role in the sex determination pathway and X chromosome dosage compensation, and together with sex-1 is involved in making the distinction between one and two X-chromosomes. Binds to 5'-GCAUG-3' and 5'-GCACG-3' elements in intron 6 of the pre-mRNA of the sex-determining factor xol-1 to promote its alternative splicing and together with sex-1 negatively regulates the expression of xol-1 to promote hermaphrodite development. Negatively regulates the expression of the active isoform of xol-1 (isoform b) by promoting intron 6 retention and the deletion of exon 7 coding sequences in hermaphrodite embryos. Furthermore, binding to the pre-mRNA of xol-1 can also direct the use of an alternative 3' splice site enabling the xol-1 transcript to be trans-spliced to unrelated genes on chromosome 2, which also leads to xol-1 exon 7 deletion. Does not seem to regulate the retention of introns 1 to 5 of xol-1 pre-mRNA. Plays a role in the association of the dosage compensation complex proteins dpy-27 and sdc-3 with the hermaphrodite X chromosomes. Binds to 5'-UGCAUG-3' elements in intron 7 of the pre-mRNA of unc-32 to promote its alternative splicing in neuronal tissues. Binds to 5'-UGCAUG-3' elements in intron 4 of the pre-mRNA of egl-15 to promote its alternative splicing in body wall muscle tissues. Promotes binding of RNA-binding protein sup-12 to target RNA. Plays a role in male mating behavior. The polypeptide is Sex determination protein fox-1 (Caenorhabditis elegans).